Reading from the N-terminus, the 236-residue chain is Leucyl/phenylalanyl-tRNA--protein transferase (236 aa).

It belongs to the L/F-transferase family.

Its subcellular location is the cytoplasm. The enzyme catalyses N-terminal L-lysyl-[protein] + L-leucyl-tRNA(Leu) = N-terminal L-leucyl-L-lysyl-[protein] + tRNA(Leu) + H(+). It carries out the reaction N-terminal L-arginyl-[protein] + L-leucyl-tRNA(Leu) = N-terminal L-leucyl-L-arginyl-[protein] + tRNA(Leu) + H(+). It catalyses the reaction L-phenylalanyl-tRNA(Phe) + an N-terminal L-alpha-aminoacyl-[protein] = an N-terminal L-phenylalanyl-L-alpha-aminoacyl-[protein] + tRNA(Phe). Its function is as follows. Functions in the N-end rule pathway of protein degradation where it conjugates Leu, Phe and, less efficiently, Met from aminoacyl-tRNAs to the N-termini of proteins containing an N-terminal arginine or lysine. This is Leucyl/phenylalanyl-tRNA--protein transferase from Nitrosomonas europaea (strain ATCC 19718 / CIP 103999 / KCTC 2705 / NBRC 14298).